Consider the following 428-residue polypeptide: UPF0761 membrane protein TERTU_3006 (428 aa).

The next 7 membrane-spanning stretches (helical) occupy residues 47–67 (LFAL…IPAF), 104–124 (LSGV…RNIE), 143–163 (YLLY…AFLL), 189–209 (VVPW…VPNC), 218–238 (IGGV…GYIV), 248–268 (GAFA…TIIL), and 292–312 (MIVV…GESV).

The protein belongs to the UPF0761 family.

The protein resides in the cell inner membrane. This chain is UPF0761 membrane protein TERTU_3006, found in Teredinibacter turnerae (strain ATCC 39867 / T7901).